A 123-amino-acid chain; its full sequence is Large ribosomal subunit protein uL14 (123 aa).

This sequence belongs to the universal ribosomal protein uL14 family. Part of the 50S ribosomal subunit. Forms a cluster with proteins L3 and L19. In the 70S ribosome, L14 and L19 interact and together make contacts with the 16S rRNA in bridges B5 and B8.

Its function is as follows. Binds to 23S rRNA. Forms part of two intersubunit bridges in the 70S ribosome. The sequence is that of Large ribosomal subunit protein uL14 from Histophilus somni (strain 129Pt) (Haemophilus somnus).